The sequence spans 436 residues: 3-ketoacyl-CoA thiolase (436 aa).

Cysteine 99 (acyl-thioester intermediate) is an active-site residue. Active-site proton acceptor residues include histidine 392 and cysteine 422.

Belongs to the thiolase-like superfamily. Thiolase family. Heterotetramer of two alpha chains (FadJ) and two beta chains (FadI).

Its subcellular location is the cytoplasm. The enzyme catalyses an acyl-CoA + acetyl-CoA = a 3-oxoacyl-CoA + CoA. Its pathway is lipid metabolism; fatty acid beta-oxidation. Catalyzes the final step of fatty acid oxidation in which acetyl-CoA is released and the CoA ester of a fatty acid two carbons shorter is formed. The sequence is that of 3-ketoacyl-CoA thiolase from Serratia proteamaculans (strain 568).